The following is a 311-amino-acid chain: tRNA dimethylallyltransferase (311 aa).

An ATP-binding site is contributed by 16-23 (GPTASGKS). Substrate is bound at residue 18 to 23 (TASGKS). Residues 41 to 44 (DSMQ) are interaction with substrate tRNA.

It belongs to the IPP transferase family. In terms of assembly, monomer. Mg(2+) is required as a cofactor.

The catalysed reaction is adenosine(37) in tRNA + dimethylallyl diphosphate = N(6)-dimethylallyladenosine(37) in tRNA + diphosphate. Catalyzes the transfer of a dimethylallyl group onto the adenine at position 37 in tRNAs that read codons beginning with uridine, leading to the formation of N6-(dimethylallyl)adenosine (i(6)A). The chain is tRNA dimethylallyltransferase from Geobacter sulfurreducens (strain ATCC 51573 / DSM 12127 / PCA).